Here is a 240-residue protein sequence, read N- to C-terminus: Glycerol uptake facilitator protein 3 (240 aa).

A run of 2 helical transmembrane segments spans residues 11 to 31 (LGEFLGTFILILLGDGVVAGV) and 41 to 61 (AGWVAITLGWGFAVTMGVYAS). Residues 70–72 (NPA) carry the NPA 1 motif. The next 3 membrane-spanning stretches (helical) occupy residues 88-108 (VIPYSAAQIAGGVIGGLVVWL), 137-157 (FWNFISEVIGTFVLVFGLLAF), and 162-182 (FTAGLNPIVVGILIIAIGLSL). The NPA 2 signature appears at 191 to 193 (NPA). Residues 219–239 (WVPIAGPLVGGALGALLFNVL) form a helical membrane-spanning segment.

This sequence belongs to the MIP/aquaporin (TC 1.A.8) family.

It localises to the cell membrane. In terms of biological role, transporter that facilitates the transmembrane diffusion of water, dihydroxyacetone, glycerol and H(2)O(2). Is not permeable to urea and D/L-lactic acid. The protein is Glycerol uptake facilitator protein 3 of Lactiplantibacillus plantarum (strain ATCC BAA-793 / NCIMB 8826 / WCFS1) (Lactobacillus plantarum).